A 507-amino-acid polypeptide reads, in one-letter code: Glucose transporter type 3 (507 aa).

Residues M1–A26 are disordered. Over M1–K53 the chain is Cytoplasmic. The chain crosses the membrane as a helical span at residues A54–T74. At A75 to S95 the chain is on the extracellular side. The helical transmembrane segment at G96–V116 threads the bilayer. Topologically, residues R117–T124 are cytoplasmic. A helical membrane pass occupies residues I125–V145. Over P146–R152 the chain is Extracellular. A helical transmembrane segment spans residues F153 to I173. Residues S174–G183 are Cytoplasmic-facing. A helical membrane pass occupies residues V184–L204. Topologically, residues E205–R207 are extracellular. Residues I208–E228 form a helical membrane-spanning segment. At S229–R293 the chain is on the cytoplasmic side. A helical membrane pass occupies residues S294–L314. The Extracellular segment spans residues N315–R324. Residues E325–V345 traverse the membrane as a helical segment. The Cytoplasmic portion of the chain corresponds to D346 to R351. The chain crosses the membrane as a helical span at residues P352 to F372. The Extracellular segment spans residues K373–V374. A helical transmembrane segment spans residues W375–V395. Topologically, residues G396 to P420 are cytoplasmic. A helical transmembrane segment spans residues L421 to F441. Residues G442–P450 lie on the Extracellular side of the membrane. The helical transmembrane segment at Y451 to I471 threads the bilayer. Residues P472–A507 lie on the Cytoplasmic side of the membrane.

This sequence belongs to the major facilitator superfamily. Sugar transporter (TC 2.A.1.1) family. Glucose transporter subfamily.

It localises to the cell membrane. The protein localises to the perikaryon. It is found in the cell projection. Functionally, facilitative glucose transporter that can also mediate the uptake of various other monosaccharides across the cell membrane. The sequence is that of Glucose transporter type 3 (Glut3) from Drosophila melanogaster (Fruit fly).